The following is a 43-amino-acid chain: Photosystem II reaction center protein K (43 aa).

A propeptide spanning residues 1–6 (MSLLLA) is cleaved from the precursor. A helical membrane pass occupies residues 18–38 (IVDVLPIIPVLFLLLAFVWQA).

Belongs to the PsbK family. As to quaternary structure, PSII is composed of 1 copy each of membrane proteins PsbA, PsbB, PsbC, PsbD, PsbE, PsbF, PsbH, PsbI, PsbJ, PsbK, PsbL, PsbM, PsbT, PsbX, PsbY, PsbZ, Psb30/Ycf12, at least 3 peripheral proteins of the oxygen-evolving complex and a large number of cofactors. It forms dimeric complexes.

The protein resides in the plastid. It is found in the chloroplast thylakoid membrane. In terms of biological role, one of the components of the core complex of photosystem II (PSII). PSII is a light-driven water:plastoquinone oxidoreductase that uses light energy to abstract electrons from H(2)O, generating O(2) and a proton gradient subsequently used for ATP formation. It consists of a core antenna complex that captures photons, and an electron transfer chain that converts photonic excitation into a charge separation. This chain is Photosystem II reaction center protein K, found in Oltmannsiellopsis viridis (Marine flagellate).